The sequence spans 174 residues: Soma ferritin (174 aa).

The region spanning 8-157 (QNYHAESEAG…DYITNLKRVG (150 aa)) is the Ferritin-like diiron domain. Fe cation contacts are provided by Glu25, Glu60, His63, Glu105, and Gln139.

Belongs to the ferritin family. As to quaternary structure, oligomer of 12 or 24 subunits. The functional molecule is roughly spherical and contains a central cavity into which the polymeric mineral iron core is deposited. Expressed in somatic tissues but not in oocytes.

The protein localises to the cytoplasm. It catalyses the reaction 4 Fe(2+) + O2 + 4 H(+) = 4 Fe(3+) + 2 H2O. Functionally, stores iron in a soluble, non-toxic, readily available form. Important for iron homeostasis. Has ferroxidase activity. Iron is taken up in the ferrous form and deposited as ferric hydroxides after oxidation. In Lymnaea stagnalis (Great pond snail), this protein is Soma ferritin.